The chain runs to 115 residues: Non-specific lipid-transfer protein 4.1 (115 aa).

The N-terminal stretch at 1-25 is a signal peptide; the sequence is MARAAASQLVLVALVAAMLLVAADA. Cystine bridges form between cysteine 29–cysteine 77, cysteine 39–cysteine 54, cysteine 55–cysteine 97, and cysteine 75–cysteine 111.

Belongs to the plant LTP family.

Functionally, plant non-specific lipid-transfer proteins transfer phospholipids as well as galactolipids across membranes. May play a role in wax or cutin deposition in the cell walls of expanding epidermal cells and certain secretory tissues. The sequence is that of Non-specific lipid-transfer protein 4.1 (LTP4.1) from Hordeum vulgare (Barley).